Consider the following 961-residue polypeptide: Probable inorganic carbon transporter subunit DabA (961 aa).

Positions 406, 408, 653, and 668 each coordinate Zn(2+).

Belongs to the inorganic carbon transporter (TC 9.A.2) DabA family. As to quaternary structure, forms a complex with DabB. Zn(2+) serves as cofactor.

It localises to the cell inner membrane. Its function is as follows. Part of an energy-coupled inorganic carbon pump. The polypeptide is Probable inorganic carbon transporter subunit DabA (Hydrogenobaculum sp. (strain Y04AAS1)).